We begin with the raw amino-acid sequence, 309 residues long: tRNA uridine(34) hydroxylase (309 aa).

The Rhodanese domain maps to 130-224; sequence SDPDTIVIDT…YLEEVPQEES (95 aa). Cys184 functions as the Cysteine persulfide intermediate in the catalytic mechanism.

This sequence belongs to the TrhO family.

The enzyme catalyses uridine(34) in tRNA + AH2 + O2 = 5-hydroxyuridine(34) in tRNA + A + H2O. Catalyzes oxygen-dependent 5-hydroxyuridine (ho5U) modification at position 34 in tRNAs. In Rhizobium etli (strain ATCC 51251 / DSM 11541 / JCM 21823 / NBRC 15573 / CFN 42), this protein is tRNA uridine(34) hydroxylase.